The sequence spans 238 residues: Valine-rich protein (238 aa).

The first 16 residues, 1-16 (MQAVLLVVALFGAALA), serve as a signal peptide directing secretion.

Prismatic layer of shell (at protein level). Expressed primarily in the mantle with highest level in the mantle edge and lower level in the mantle pallium.

The protein localises to the secreted. The chain is Valine-rich protein from Pinctada maxima (Silver-lipped pearl oyster).